Reading from the N-terminus, the 117-residue chain is Ig heavy chain V region 3 (117 aa).

A signal peptide spans 1–19; that stretch reads MGWSCIILFLVATATGVHS. A framework-1 region spans residues 20–49; it reads QVQLQQPGAELVRPGSSVKLSCKASGYTFT. The cysteines at positions 41 and 115 are disulfide-linked. Positions 50 to 54 are complementarity-determining-1; sequence SYWMD. A framework-2 region spans residues 55 to 68; sequence WVKQRPGQGLEWIG. Residues 69 to 85 are complementarity-determining-2; it reads NIYPSDSETHYNQKFKD. Residues 86–117 are framework-3; the sequence is KATLTVDKSSSTAYMQLSSLTSEDSAVYYCAR.

The protein is Ig heavy chain V region 3 (Ighv1-61) of Mus musculus (Mouse).